Here is a 228-residue protein sequence, read N- to C-terminus: Ribonuclease 3 (228 aa).

Residues 5–127 enclose the RNase III domain; the sequence is KDALQDRLGY…LFGAIYLDGG (123 aa). Glutamate 40 is a binding site for Mg(2+). The active site involves aspartate 44. The Mg(2+) site is built by aspartate 113 and glutamate 116. Glutamate 116 is an active-site residue. The region spanning 154-224 is the DRBM domain; sequence DPKTRLQEHL…AEQMLKRLED (71 aa). The interval 200-228 is disordered; the sequence is AEGEAGSRRKAEQQAAEQMLKRLEDKHER. The segment covering 218-228 has biased composition (basic and acidic residues); it reads MLKRLEDKHER.

Belongs to the ribonuclease III family. Homodimer. Requires Mg(2+) as cofactor.

It is found in the cytoplasm. The catalysed reaction is Endonucleolytic cleavage to 5'-phosphomonoester.. Functionally, digests double-stranded RNA. Involved in the processing of primary rRNA transcript to yield the immediate precursors to the large and small rRNAs (23S and 16S). Processes some mRNAs, and tRNAs when they are encoded in the rRNA operon. Processes pre-crRNA and tracrRNA of type II CRISPR loci if present in the organism. This is Ribonuclease 3 from Alkalilimnicola ehrlichii (strain ATCC BAA-1101 / DSM 17681 / MLHE-1).